The sequence spans 186 residues: Lipid A palmitoyltransferase PagP (186 aa).

The first 25 residues, 1-25 (MNVSKYVAIFSFVFIQLISVGKVFA), serve as a signal peptide directing secretion. Residues H58, D101, and S102 contribute to the active site.

The protein belongs to the lipid A palmitoyltransferase family. As to quaternary structure, homodimer.

It is found in the cell outer membrane. The catalysed reaction is lipid A (E. coli) + a 1-hexadecanoyl-2-acyl-sn-glycero-3-phosphocholine = hepta-acyl lipid A (E. coli) + a 2-acyl-sn-glycero-3-phosphocholine. It carries out the reaction lipid IIA + a 1-hexadecanoyl-2-acyl-sn-glycero-3-phosphocholine = lipid IIB + a 2-acyl-sn-glycero-3-phosphocholine. It catalyses the reaction lipid IVA (E. coli) + a 1-hexadecanoyl-2-acyl-sn-glycero-3-phosphocholine = lipid IVB (E. coli) + a 2-acyl-sn-glycero-3-phosphocholine. With respect to regulation, inhibited by lauryldimethylamine oxide (LDAO) and dodecylphosphocholine (DPC). In terms of biological role, transfers a palmitate residue from the sn-1 position of a phospholipid to the N-linked hydroxymyristate on the proximal unit of lipid A or its precursors. Phosphatidylglycerol (PtdGro), phosphatidylethanolamine (PtdEtn), phosphatidylserine (PtdSer) and phosphatidic acid (Ptd-OH) are all effective acyl donors. In Escherichia coli (strain K12), this protein is Lipid A palmitoyltransferase PagP.